A 481-amino-acid polypeptide reads, in one-letter code: Argininosuccinate lyase (481 aa).

Belongs to the lyase 1 family. Argininosuccinate lyase subfamily.

It localises to the cytoplasm. The catalysed reaction is 2-(N(omega)-L-arginino)succinate = fumarate + L-arginine. It participates in amino-acid biosynthesis; L-arginine biosynthesis; L-arginine from L-ornithine and carbamoyl phosphate: step 3/3. The polypeptide is Argininosuccinate lyase (Kineococcus radiotolerans (strain ATCC BAA-149 / DSM 14245 / SRS30216)).